The primary structure comprises 411 residues: Dual-specificity RNA methyltransferase RlmN (411 aa).

The active-site Proton acceptor is the E125. Residues 131–380 (EEGRGTLCVS…IRTPRGRDIL (250 aa)) form the Radical SAM core domain. Residues C138 and C383 are joined by a disulfide bond. Residues C145, C149, and C152 each coordinate [4Fe-4S] cluster. S-adenosyl-L-methionine contacts are provided by residues 209-210 (GE), S241, 263-265 (SLH), and N340. Catalysis depends on C383, which acts as the S-methylcysteine intermediate.

The protein belongs to the radical SAM superfamily. RlmN family. Requires [4Fe-4S] cluster as cofactor.

Its subcellular location is the cytoplasm. The enzyme catalyses adenosine(2503) in 23S rRNA + 2 reduced [2Fe-2S]-[ferredoxin] + 2 S-adenosyl-L-methionine = 2-methyladenosine(2503) in 23S rRNA + 5'-deoxyadenosine + L-methionine + 2 oxidized [2Fe-2S]-[ferredoxin] + S-adenosyl-L-homocysteine. It catalyses the reaction adenosine(37) in tRNA + 2 reduced [2Fe-2S]-[ferredoxin] + 2 S-adenosyl-L-methionine = 2-methyladenosine(37) in tRNA + 5'-deoxyadenosine + L-methionine + 2 oxidized [2Fe-2S]-[ferredoxin] + S-adenosyl-L-homocysteine. Specifically methylates position 2 of adenine 2503 in 23S rRNA and position 2 of adenine 37 in tRNAs. m2A2503 modification seems to play a crucial role in the proofreading step occurring at the peptidyl transferase center and thus would serve to optimize ribosomal fidelity. The sequence is that of Dual-specificity RNA methyltransferase RlmN from Brucella anthropi (strain ATCC 49188 / DSM 6882 / CCUG 24695 / JCM 21032 / LMG 3331 / NBRC 15819 / NCTC 12168 / Alc 37) (Ochrobactrum anthropi).